The sequence spans 547 residues: Apolipoprotein N-acyltransferase (547 aa).

The next 6 membrane-spanning stretches (helical) occupy residues 31–51, 65–85, 89–109, 144–164, 181–201, and 215–235; these read PLPA…AAHA, GWLF…VSMH, GLAA…LALF, AACW…FPWL, LLGV…LAGL, and LAAG…QFSW. One can recognise a CN hydrolase domain in the interval 248–511; it reads VQGNVEQSQK…AGVLPVAVQG (264 aa). The active-site Proton acceptor is E292. Residue K366 is part of the active site. C416 (nucleophile) is an active-site residue.

Belongs to the CN hydrolase family. Apolipoprotein N-acyltransferase subfamily.

Its subcellular location is the cell inner membrane. It carries out the reaction N-terminal S-1,2-diacyl-sn-glyceryl-L-cysteinyl-[lipoprotein] + a glycerophospholipid = N-acyl-S-1,2-diacyl-sn-glyceryl-L-cysteinyl-[lipoprotein] + a 2-acyl-sn-glycero-3-phospholipid + H(+). It participates in protein modification; lipoprotein biosynthesis (N-acyl transfer). Functionally, catalyzes the phospholipid dependent N-acylation of the N-terminal cysteine of apolipoprotein, the last step in lipoprotein maturation. This Bordetella bronchiseptica (strain ATCC BAA-588 / NCTC 13252 / RB50) (Alcaligenes bronchisepticus) protein is Apolipoprotein N-acyltransferase.